A 485-amino-acid chain; its full sequence is Glutamyl-tRNA(Gln) amidotransferase subunit A (485 aa).

Catalysis depends on charge relay system residues Lys-79 and Ser-154. The active-site Acyl-ester intermediate is the Ser-178.

It belongs to the amidase family. GatA subfamily. Heterotrimer of A, B and C subunits.

The enzyme catalyses L-glutamyl-tRNA(Gln) + L-glutamine + ATP + H2O = L-glutaminyl-tRNA(Gln) + L-glutamate + ADP + phosphate + H(+). Functionally, allows the formation of correctly charged Gln-tRNA(Gln) through the transamidation of misacylated Glu-tRNA(Gln) in organisms which lack glutaminyl-tRNA synthetase. The reaction takes place in the presence of glutamine and ATP through an activated gamma-phospho-Glu-tRNA(Gln). This is Glutamyl-tRNA(Gln) amidotransferase subunit A from Clostridium botulinum (strain Eklund 17B / Type B).